A 73-amino-acid polypeptide reads, in one-letter code: Translation initiation factor IF-1 (73 aa).

The region spanning 1–73 (MGKKEEAFEV…TKGRIVYRER (73 aa)) is the S1-like domain.

It belongs to the IF-1 family. As to quaternary structure, component of the 30S ribosomal translation pre-initiation complex which assembles on the 30S ribosome in the order IF-2 and IF-3, IF-1 and N-formylmethionyl-tRNA(fMet); mRNA recruitment can occur at any time during PIC assembly.

Its subcellular location is the cytoplasm. One of the essential components for the initiation of protein synthesis. Stabilizes the binding of IF-2 and IF-3 on the 30S subunit to which N-formylmethionyl-tRNA(fMet) subsequently binds. Helps modulate mRNA selection, yielding the 30S pre-initiation complex (PIC). Upon addition of the 50S ribosomal subunit IF-1, IF-2 and IF-3 are released leaving the mature 70S translation initiation complex. In Rhodopirellula baltica (strain DSM 10527 / NCIMB 13988 / SH1), this protein is Translation initiation factor IF-1.